The primary structure comprises 389 residues: Curcumin synthase 1 (389 aa).

Residue cysteine 164 is part of the active site.

This sequence belongs to the thiolase-like superfamily. Chalcone/stilbene synthases family. As to quaternary structure, homodimer. In terms of tissue distribution, expressed in both the leaf and rhizome, with higher expression in the rhizome.

It carries out the reaction (E)-feruloylacetyl-CoA + (E)-feruloyl-CoA + H2O = curcumin + CO2 + 2 CoA. It participates in secondary metabolite biosynthesis; flavonoid biosynthesis. Its function is as follows. Catalyzes the synthesis of curcumin by condensing feruloyl-CoA with a diketide-CoA in the curcuminoid biosynthesis. The polypeptide is Curcumin synthase 1 (CURS1) (Curcuma longa (Turmeric)).